The chain runs to 211 residues: Large ribosomal subunit protein bL25 (211 aa).

The interval 186–211 (GRALQSMDAAESAVEQPGEQPATAAG) is disordered.

Belongs to the bacterial ribosomal protein bL25 family. CTC subfamily. Part of the 50S ribosomal subunit; part of the 5S rRNA/L5/L18/L25 subcomplex. Contacts the 5S rRNA. Binds to the 5S rRNA independently of L5 and L18.

Its function is as follows. This is one of the proteins that binds to the 5S RNA in the ribosome where it forms part of the central protuberance. In Gloeobacter violaceus (strain ATCC 29082 / PCC 7421), this protein is Large ribosomal subunit protein bL25.